The sequence spans 297 residues: Tyrosine recombinase XerD (297 aa).

The region spanning 1 to 86 is the Core-binding (CB) domain; sequence MKNLALIDLF…AMRKLFQYLY (86 aa). Positions 107-291 constitute a Tyr recombinase domain; sequence RLPKYLTEQQ…AKERLKRLHE (185 aa). Residues Arg147, Lys171, His243, Arg246, and His269 contribute to the active site. Tyr278 (O-(3'-phospho-DNA)-tyrosine intermediate) is an active-site residue.

This sequence belongs to the 'phage' integrase family. XerD subfamily. In terms of assembly, forms a cyclic heterotetrameric complex composed of two molecules of XerC and two molecules of XerD.

It localises to the cytoplasm. Its function is as follows. Site-specific tyrosine recombinase, which acts by catalyzing the cutting and rejoining of the recombining DNA molecules. The XerC-XerD complex is essential to convert dimers of the bacterial chromosome into monomers to permit their segregation at cell division. It also contributes to the segregational stability of plasmids. The polypeptide is Tyrosine recombinase XerD (Haemophilus influenzae (strain ATCC 51907 / DSM 11121 / KW20 / Rd)).